The following is a 476-amino-acid chain: Cysteine--tRNA ligase (476 aa).

Cysteine 31 serves as a coordination point for Zn(2+). The short motif at 33 to 43 (PTVYNYAHIGN) is the 'HIGH' region element. Zn(2+) is bound by residues cysteine 211, histidine 236, and glutamate 240. The 'KMSKS' region signature appears at 269-273 (KMSKS). Lysine 272 serves as a coordination point for ATP.

The protein belongs to the class-I aminoacyl-tRNA synthetase family. Monomer. It depends on Zn(2+) as a cofactor.

Its subcellular location is the cytoplasm. It catalyses the reaction tRNA(Cys) + L-cysteine + ATP = L-cysteinyl-tRNA(Cys) + AMP + diphosphate. The protein is Cysteine--tRNA ligase of Xanthomonas axonopodis pv. citri (strain 306).